The primary structure comprises 173 residues: 5-hydroxymethyl-dUMP N-hydrolase (173 aa).

Ala2 bears the N-acetylalanine mark. Gly16 provides a ligand contact to 5-hydroxymethyl-dUMP. A Phosphoserine modification is found at Ser17. Residues Ile18, Arg19, Gly20, Ser87, Gly89, and Glu93 each coordinate 5-hydroxymethyl-dUMP. Ser87 is subject to Phosphoserine. Residues Ser112, Ser117, Ser127, and Ser158 each carry the phosphoserine modification. Residue Ser117 participates in 5-hydroxymethyl-dUMP binding.

It belongs to the 2'-deoxynucleoside 5'-phosphate N-hydrolase 1 family. Monomer and homodimer.

It localises to the cytoplasm. The protein resides in the nucleus. It carries out the reaction 5-hydroxymethyl-dUMP + H2O = 5-hydroxymethyluracil + 2-deoxy-D-ribose 5-phosphate. Part of a nucleotide salvage pathway that eliminates epigenetically modified 5-hydroxymethyl-dCMP (hmdCMP) in a two-step process entailing deamination to cytotoxic 5-hydroxymethyl-dUMP (hmdUMP), followed by its hydrolysis into 5-hydroxymethyluracil (hmU) and 2-deoxy-D-ribose 5-phosphate (deoxyribosephosphate). Catalyzes the second step in that pathway, the hydrolysis of the N-glycosidic bond in hmdUMP, degrading this cytotoxic nucleotide to avoid its genomic integration. The protein is 5-hydroxymethyl-dUMP N-hydrolase of Mus musculus (Mouse).